The primary structure comprises 298 residues: Arginase (298 aa).

Mn(2+) is bound by residues H98, D121, H123, and D125. Substrate-binding positions include 123–127 (HGDLN), 134–136 (SGN), and D177. The Mn(2+) site is built by D225 and D227. Substrate contacts are provided by T239 and E270.

The protein belongs to the arginase family. Mn(2+) serves as cofactor.

It catalyses the reaction L-arginine + H2O = urea + L-ornithine. It functions in the pathway nitrogen metabolism; urea cycle; L-ornithine and urea from L-arginine: step 1/1. This is Arginase (rocF) from Brevibacillus brevis (Bacillus brevis).